Here is a 185-residue protein sequence, read N- to C-terminus: MTTPNKTPPGADPKQLERTATVREIGSQAVWSLSSCKPGFGVDQLRDDNLETYWQSDGSQPHLVNIQFRRKTTVKTLCIYADYKSDESYTPSKISVRVGNNFHNLQEIRQLELVEPSGWIHVPLTDNHKKPTRTFMIQIAVLANHQNGRDTHMRQIKIYTPVEESSIGKFPRCTTIDFMMYRSIR.

Position 2 is an N-acetylthreonine (Thr2). A DOC domain is found at 2 to 185 (TTPNKTPPGA…IDFMMYRSIR (184 aa)). Lys169 bears the N6-acetyllysine mark.

This sequence belongs to the APC10 family. As to quaternary structure, the mammalian APC/C is composed at least of 14 distinct subunits ANAPC1, ANAPC2, CDC27/APC3, ANAPC4, ANAPC5, CDC16/APC6, ANAPC7, CDC23/APC8, ANAPC10, ANAPC11, CDC26/APC12, ANAPC13, ANAPC15 and ANAPC16 that assemble into a complex of at least 19 chains with a combined molecular mass of around 1.2 MDa; APC/C interacts with FZR1 and FBXO5. The C-terminus of APC10 binds to CDC27/APC3. Interacts with PIWIL1; interaction only takes place when PIWIL1 binds piRNA. Interacts with FBXO43; the interaction is direct.

It functions in the pathway protein modification; protein ubiquitination. Functionally, component of the anaphase promoting complex/cyclosome (APC/C), a cell cycle-regulated E3 ubiquitin ligase that controls progression through mitosis and the G1 phase of the cell cycle. The APC/C complex acts by mediating ubiquitination and subsequent degradation of target proteins: it mainly mediates the formation of 'Lys-11'-linked polyubiquitin chains and, to a lower extent, the formation of 'Lys-48'- and 'Lys-63'-linked polyubiquitin chains. The APC/C complex catalyzes assembly of branched 'Lys-11'-/'Lys-48'-linked branched ubiquitin chains on target proteins. This chain is Anaphase-promoting complex subunit 10 (Anapc10), found in Mus musculus (Mouse).